Reading from the N-terminus, the 467-residue chain is Variant surface glycoprotein 7 (467 aa).

Polar residues predominate over residues 77–87; that stretch reads TIAAGATNTKL. The tract at residues 77–133 is disordered; that stretch reads TIAAGATNTKLSGHHPNQGRRGRRRSSSARPNNSKGNSPSKRAGGAVRGETPASGRL. Residues 93-103 are compositionally biased toward basic residues; sequence NQGRRGRRRSS. Polar residues predominate over residues 107–116; the sequence is PNNSKGNSPS. 2 N-linked (GlcNAc...) asparagine glycosylation sites follow: Asn108 and Asn252. Positions 382 to 407 are disordered; it reads AEKVENPRSQGNPETAENKKEGGNTA. An N-linked (GlcNAc...) asparagine glycan is attached at Asn416. Asp444 is lipidated: GPI-anchor amidated aspartate. Positions 445-467 are cleaved as a propeptide — removed in mature form; it reads SSFLLSKQFALSVVSAAFAALLF.

It localises to the cell membrane. In terms of biological role, VSG forms a coat on the surface of the parasite. The trypanosome evades the immune response of the host by expressing a series of antigenically distinct VSGs from an estimated 1000 VSG genes. The sequence is that of Variant surface glycoprotein 7 from Trypanosoma brucei rhodesiense.